Here is a 196-residue protein sequence, read N- to C-terminus: MMGYIPYVIENTDRGERSYDIYSRLLKDRIVLLSGEINDSVASSIVAQLLFLEAEDPEKDIGLYINSPGGVITSGLSIYDTMNFIRPDVSTICIGQAASMGAFLLSCGAKGKRFSLPHSRIMIHQPLGGAQGQASDIEIISNEILRLKGLMNSILAQNSGQSLEQIAKDTDRDFYMSAKEAKEYGLIDKVLQKNVK.

Ser99 serves as the catalytic Nucleophile. His124 is an active-site residue.

Belongs to the peptidase S14 family. In terms of assembly, fourteen ClpP subunits assemble into 2 heptameric rings which stack back to back to give a disk-like structure with a central cavity, resembling the structure of eukaryotic proteasomes.

The protein resides in the cytoplasm. It catalyses the reaction Hydrolysis of proteins to small peptides in the presence of ATP and magnesium. alpha-casein is the usual test substrate. In the absence of ATP, only oligopeptides shorter than five residues are hydrolyzed (such as succinyl-Leu-Tyr-|-NHMec, and Leu-Tyr-Leu-|-Tyr-Trp, in which cleavage of the -Tyr-|-Leu- and -Tyr-|-Trp bonds also occurs).. Its function is as follows. Cleaves peptides in various proteins in a process that requires ATP hydrolysis. Has a chymotrypsin-like activity. Plays a major role in the degradation of misfolded proteins. The protein is ATP-dependent Clp protease proteolytic subunit of Helicobacter pylori (strain ATCC 700392 / 26695) (Campylobacter pylori).